The sequence spans 134 residues: Cytochrome c-type biogenesis protein CcmE (134 aa).

The Cytoplasmic portion of the chain corresponds to 1–7; sequence MKRKYRR. The chain crosses the membrane as a helical; Signal-anchor for type II membrane protein span at residues 8 to 28; that stretch reads LFVVIITLSIFAGSVVLVLGK. Over 29-134 the chain is Periplasmic; that stretch reads LKNNVSFFYT…MPNKYKTNDL (106 aa). Heme-binding residues include His120 and Tyr124.

The protein belongs to the CcmE/CycJ family.

It is found in the cell inner membrane. Its function is as follows. Heme chaperone required for the biogenesis of c-type cytochromes. Transiently binds heme delivered by CcmC and transfers the heme to apo-cytochromes in a process facilitated by CcmF and CcmH. This is Cytochrome c-type biogenesis protein CcmE from Ehrlichia ruminantium (strain Welgevonden).